Reading from the N-terminus, the 333-residue chain is GDP-fucose transporter 1 (333 aa).

The next 8 helical transmembrane spans lie at 13-33, 45-65, 95-115, 139-159, 169-189, 211-231, 239-259, and 293-313; these read SIKIAFVVALYWVVSISMVFL, APMFVTWFQCVVAVVTCFILG, LVFVGMIAFNNLALKFVGVAF, TSMPALLMCGVIVAGFFVGVN, MAGIMYGVLASLCVALNAIYI, AIFLFLPVITFMGEIPDIAAS, YWFLMTVAGLLGIAIGLVSML, and TATWWLGNVFVLGGSLGYVLV.

The protein belongs to the TPT transporter family. SLC35C subfamily.

The protein localises to the golgi apparatus membrane. The catalysed reaction is GMP(out) + GDP-beta-L-fucose(in) = GMP(in) + GDP-beta-L-fucose(out). In terms of biological role, antiporter specific for GDP-l-fucose and depending on the concomitant reverse transport of GMP. Involved in GDP-fucose import from the cytoplasm into the Golgi lumen. The chain is GDP-fucose transporter 1 (slc35c1) from Monosiga brevicollis (Choanoflagellate).